A 176-amino-acid polypeptide reads, in one-letter code: Acireductone dioxygenase (176 aa).

Residues 1–21 form a disordered region; that stretch reads MKAYWYDNKPGDQREPHDSGR. The span at 9 to 20 shows a compositional bias: basic and acidic residues; sequence KPGDQREPHDSG. Fe(2+) contacts are provided by histidine 81, histidine 83, glutamate 87, and histidine 126. Positions 81, 83, 87, and 126 each coordinate Ni(2+).

It belongs to the acireductone dioxygenase (ARD) family. It depends on Fe(2+) as a cofactor. Ni(2+) serves as cofactor.

It localises to the cytoplasm. Its subcellular location is the nucleus. The enzyme catalyses 1,2-dihydroxy-5-(methylsulfanyl)pent-1-en-3-one + O2 = 4-methylsulfanyl-2-oxobutanoate + formate + 2 H(+). It catalyses the reaction 1,2-dihydroxy-5-(methylsulfanyl)pent-1-en-3-one + O2 = 3-(methylsulfanyl)propanoate + CO + formate + 2 H(+). It participates in amino-acid biosynthesis; L-methionine biosynthesis via salvage pathway; L-methionine from S-methyl-5-thio-alpha-D-ribose 1-phosphate: step 5/6. Functionally, catalyzes 2 different reactions between oxygen and the acireductone 1,2-dihydroxy-3-keto-5-methylthiopentene (DHK-MTPene) depending upon the metal bound in the active site. Fe-containing acireductone dioxygenase (Fe-ARD) produces formate and 2-keto-4-methylthiobutyrate (KMTB), the alpha-ketoacid precursor of methionine in the methionine recycle pathway. Ni-containing acireductone dioxygenase (Ni-ARD) produces methylthiopropionate, carbon monoxide and formate, and does not lie on the methionine recycle pathway. The protein is Acireductone dioxygenase (adi1) of Aspergillus fumigatus (strain ATCC MYA-4609 / CBS 101355 / FGSC A1100 / Af293) (Neosartorya fumigata).